A 450-amino-acid polypeptide reads, in one-letter code: Glutathione reductase (450 aa).

Residues S14, G15, E34, T41, C42, K50, and A115 each contribute to the FAD site. S14 contacts glutathione. C42 and C47 form a disulfide bridge. Residues A175, I178, E181, R198, R204, and G262 each coordinate NADP(+). D303 is a binding site for FAD. D309 is a binding site for NADP(+). T311 is an FAD binding site. R319 provides a ligand contact to glutathione. NADP(+) is bound at residue V342. Residue H439 participates in FAD binding. H439 serves as the catalytic Proton acceptor.

This sequence belongs to the class-I pyridine nucleotide-disulfide oxidoreductase family. Homodimer. FAD is required as a cofactor.

It localises to the cytoplasm. The catalysed reaction is 2 glutathione + NADP(+) = glutathione disulfide + NADPH + H(+). Its function is as follows. Catalyzes the reduction of glutathione disulfide (GSSG) to reduced glutathione (GSH). Constitutes the major mechanism to maintain a high GSH:GSSG ratio in the cytosol. This Streptococcus thermophilus protein is Glutathione reductase (gor).